A 172-amino-acid chain; its full sequence is Large ribosomal subunit protein bL9 (172 aa).

This sequence belongs to the bacterial ribosomal protein bL9 family.

Binds to the 23S rRNA. The polypeptide is Large ribosomal subunit protein bL9 (Chlamydia abortus (strain DSM 27085 / S26/3) (Chlamydophila abortus)).